The primary structure comprises 555 residues: Dimethylaniline monooxygenase [N-oxide-forming] 4 (555 aa).

FAD is bound by residues 9-13 (GAGVS), glutamate 32, and 40-41 (LW). Residues 60-61 (TN) and 195-198 (SGGD) each bind NADP(+). The helical transmembrane segment at 515 to 532 (YLKVWGAPLLLASVLLIC) threads the bilayer.

The protein belongs to the FMO family. The cofactor is FAD. As to expression, kidney and liver.

The protein resides in the microsome membrane. It localises to the endoplasmic reticulum membrane. The enzyme catalyses N,N-dimethylaniline + NADPH + O2 + H(+) = N,N-dimethylaniline N-oxide + NADP(+) + H2O. Its function is as follows. This protein is involved in the oxidative metabolism of a variety of xenobiotics such as drugs and pesticides. In Oryctolagus cuniculus (Rabbit), this protein is Dimethylaniline monooxygenase [N-oxide-forming] 4 (FMO4).